We begin with the raw amino-acid sequence, 688 residues long: Probable glucan endo-1,3-beta-glucosidase btgC (688 aa).

3 disordered regions span residues 1-49 (MSGP…MNGQ), 61-91 (DGRQGWGRSPEPSPSLLTGSSATPGMDNLGP), and 169-194 (QLTPGQSVSHLSSTNPSQRNLYDIPY). The Cytoplasmic portion of the chain corresponds to 1–307 (MSGPNRTYSF…PKPGGGNKKR (307 aa)). Positions 175–188 (SVSHLSSTNPSQRN) are enriched in polar residues. The helical; Signal-anchor for type II membrane protein transmembrane segment at 308 to 328 (GWIVGAILAFIIIGAIVGGAV) threads the bilayer. Residues 329–688 (GGTIGHRGNE…IPDCGGKTAT (360 aa)) are Extracellular-facing. The disordered stretch occupies residues 334-363 (HRGNEEPSSASSASSSSTQTATEDTSVNGD). Residues 341 to 355 (SSASSASSSSTQTAT) show a composition bias toward low complexity. Asparagine 408, asparagine 431, and asparagine 459 each carry an N-linked (GlcNAc...) asparagine glycan. Catalysis depends on glutamate 491, which acts as the Proton donor. Glutamate 590 acts as the Nucleophile in catalysis. N-linked (GlcNAc...) asparagine glycans are attached at residues asparagine 609 and asparagine 635.

It belongs to the glycosyl hydrolase 17 family.

The protein localises to the cell membrane. It catalyses the reaction Hydrolysis of (1-&gt;3)-beta-D-glucosidic linkages in (1-&gt;3)-beta-D-glucans.. Glucanases play a role in cell expansion during growth, in cell-cell fusion during mating, and in spore release during sporulation. This enzyme may be involved in beta-glucan degradation. Active on laminarin and lichenan. The protein is Probable glucan endo-1,3-beta-glucosidase btgC (btgC) of Aspergillus fumigatus (strain CBS 144.89 / FGSC A1163 / CEA10) (Neosartorya fumigata).